The primary structure comprises 1984 residues: Sodium channel protein type 9 subunit alpha (1984 aa).

The Cytoplasmic segment spans residues 1–125 (MAMLPPPGPQ…RRISIKILVH (125 aa)). Residues 26 to 39 (RISEEKAKGHKDEK) are compositionally biased toward basic and acidic residues. Residues 26–55 (RISEEKAKGHKDEKKDDEEEGPKPSSDLEA) are disordered. The stretch at 112-410 (FSPLRRISIK…VAMAYEEQNQ (299 aa)) is one I repeat. Residues 126-145 (SLFSMLIMCTILTNCIFMTM) form a helical membrane-spanning segment. Over 146–150 (SNPPD) the chain is Extracellular. The helical transmembrane segment at 151-172 (WTKNVEYTFTGIYTFESLIKIL) threads the bilayer. Residues 173 to 185 (ARGFCVGEFTFLR) lie on the Cytoplasmic side of the membrane. A helical membrane pass occupies residues 186-204 (DPWNWLDFVVIVFAYLTEF). The Extracellular segment spans residues 205–210 (VNLGNV). A helical transmembrane segment spans residues 211 to 227 (SALRTFRVLRALKTISV). Topologically, residues 228–241 (IPGLKTIVGALIQS) are cytoplasmic. A helical membrane pass occupies residues 242–267 (VKKLSDVMILTVFCLSVFALIGLQLF). The Extracellular portion of the chain corresponds to 268 to 346 (MGNLKHKCFR…PDYGYTSFDT (79 aa)). C275 and C324 are joined by a disulfide. Residues 347–363 (FGWAFLALFRLMTQDYW) constitute an intramembrane region (pore-forming). The Extracellular portion of the chain corresponds to 364-376 (ENLYQQTLRAAGK). Residues 377–402 (TYMIFFVVVIFLGSFYLINLILAVVA) form a helical membrane-spanning segment. The stretch at 402 to 449 (AMAYEEQNQANIEEAKQKELEFQQMLDRLKKEQEEAEAIAAAAAEYTS) forms a coiled coil. The Cytoplasmic segment spans residues 403–744 (MAYEEQNQAN…FIYFIVMDPF (342 aa)). Over residues 458 to 471 (LSESSSETSRLSSK) the composition is skewed to low complexity. Disordered regions lie at residues 458–540 (LSES…SIRG) and 574–609 (HSIF…RSPP). Over residues 474-486 (KERRNRRKKKKQK) the composition is skewed to basic residues. Basic and acidic residues-rich tracts occupy residues 489–509 (SGEE…ESIR) and 574–584 (HSIFGDNESRR). Residues 684-708 (LRQRAMSRASILTNTVEELEESRQK) adopt a coiled-coil conformation. Residues 725–988 (CSPYWIKFKK…EEDTDANNLQ (264 aa)) form an II repeat. The helical transmembrane segment at 745-761 (VDLAITICIVLNTLFMA) threads the bilayer. Over 762 to 770 (MEHHPMTDE) the chain is Extracellular. The helical transmembrane segment at 771-795 (FKNVLAVGNLVFTGIFAAEMVLKLI) threads the bilayer. The Cytoplasmic segment spans residues 796–804 (AMDPYEYFQ). A helical membrane pass occupies residues 805–821 (VGWNIFDSLIVTLSLVE). At 822 to 830 (LFLADVEGL) the chain is on the extracellular side. Residues 831 to 847 (SVLRSFRLLRVFKLAKS) form a helical membrane-spanning segment. Topologically, residues 848–864 (WPTLNMLIKIIGNSVGA) are cytoplasmic. A helical transmembrane segment spans residues 865–887 (LGNLTLVLAIIVFIFAVVGMQLF). Residues 888–914 (GKSYKECVCKINENCKLPRWHMNDFFH) are Extracellular-facing. C896 and C902 form a disulfide bridge. The segment at residues 915-927 (SFLIVFRVLCGEW) is an intramembrane region (pore-forming). At 928-939 (IETMWDCMEVAG) the chain is on the extracellular side. C934 and C943 are disulfide-bonded. The helical transmembrane segment at 940–966 (QTMCLIVYMMVMVIGNLVVLNLFLALL) threads the bilayer. Over 967-1185 (LSSFSSDNLT…WWTIRKTCYR (219 aa)) the chain is Cytoplasmic. Disordered stretches follow at residues 1015–1039 (KKPK…YISN) and 1089–1145 (PIAP…EPIN). Positions 1019–1035 (GSKDTKRTADPNNKREN) are enriched in basic and acidic residues. Residues 1135–1145 (GEEEAEAEPIN) show a composition bias toward acidic residues. Residues 1178-1486 (TIRKTCYRIV…KKYYNAMKKL (309 aa)) form an III repeat. A helical membrane pass occupies residues 1186 to 1210 (IVEHSWFESFIVLMILLSSGALAFE). Over 1211–1222 (DIYIEKKKTIKI) the chain is Extracellular. A helical transmembrane segment spans residues 1223–1248 (ILEYADKIFTYIFILEMLLKWVAYGY). Over 1249-1250 (KT) the chain is Cytoplasmic. The helical transmembrane segment at 1251-1276 (YFTNAWCWLDFLIVDVSLVTLVANTL) threads the bilayer. The Extracellular segment spans residues 1277–1285 (GYSDLGPIK). The chain crosses the membrane as a helical span at residues 1286 to 1302 (SLRTLRALRPLRALSRF). Residues 1303 to 1315 (EGMRVVVNALIGA) are Cytoplasmic-facing. A helical transmembrane segment spans residues 1316–1340 (IPSIMNVLLVCLIFWLIFSIMGVNL). Over 1341–1392 (FAGKFYECVNTTDGSRFSVSQVANRSECFALMNVSGNVRWKNLKVNFDNVGL) the chain is Extracellular. Cysteines 1348 and 1368 form a disulfide. An intramembrane region (pore-forming) is located at residues 1393 to 1403 (GYLSLLQVATF). Residues 1404 to 1429 (KGWMDIMYAAVDSVNVNAQPIYEYNL) are Extracellular-facing. A helical transmembrane segment spans residues 1430–1455 (YMYIYFVIFIIFGSFFTLNLFIGVII). Topologically, residues 1456-1512 (DNFNQQKKKLGGQDIFMTEEQKKYYNAMKKLGSKKPQKPIPRPGNKFQGCIFDLVTN) are cytoplasmic. S1488 bears the Phosphoserine; by PKC mark. The IV repeat unit spans residues 1495-1793 (IPRPGNKFQG…WEKFDPDATQ (299 aa)). Residues 1513–1532 (QAFDITIMVLICLNMVTMMV) traverse the membrane as a helical segment. The Extracellular segment spans residues 1533-1543 (EKEGQTDYMSF). A helical membrane pass occupies residues 1544 to 1565 (VLYWINVVFIILFTGECVLKLI). The Cytoplasmic portion of the chain corresponds to 1566–1574 (SLRHYYFTV). A helical membrane pass occupies residues 1575–1596 (GWNIFDFVVVILSIVGMFLAEM). Residues 1597–1605 (IEKYFVSPT) lie on the Extracellular side of the membrane. Residues 1606-1625 (LFRVIRLARIGRILRLIKGA) traverse the membrane as a helical segment. The Cytoplasmic portion of the chain corresponds to 1626–1638 (KGIRTLLFALMMS). The chain crosses the membrane as a helical span at residues 1639-1661 (LPALFNIGLLLFLVMFIYAIFGM). The Extracellular portion of the chain corresponds to 1662-1684 (SNFAYVKKEAGINDMFNFETFGN). An intramembrane region (pore-forming) is located at residues 1685 to 1697 (SMICLFQITTSAG). Residues 1698 to 1731 (WDGLLAPILNSAPPDCDPKKVHPGSSVEGDCGNP) lie on the Extracellular side of the membrane. C1713 and C1728 are disulfide-bonded. The helical transmembrane segment at 1732 to 1757 (SVGIFYFVSYIIISFLVVVNMYIAVI) threads the bilayer. The Cytoplasmic segment spans residues 1758-1984 (LENFSVATEE…EDKEKDESRK (227 aa)). Residues 1887–1916 (EDVSATIIQRAYRRYRLRQNVKNISSIYIK) form the IQ domain. Positions 1933 to 1984 (DNVNENSSPEKTDATASTISPPSYDSVTKPDQEKYETDKTEKEDKEKDESRK) are disordered. Positions 1946-1958 (ATASTISPPSYDS) are enriched in polar residues. Positions 1960 to 1984 (TKPDQEKYETDKTEKEDKEKDESRK) are enriched in basic and acidic residues.

It belongs to the sodium channel (TC 1.A.1.10) family. Nav1.7/SCN9A subfamily. As to quaternary structure, the Nav1.7 voltage-gated sodium channel consists of an ion-conducting alpha subunit SCN9A which is functional on its own regulated by one or more beta-1 (SCN1B), beta-2 (SCN2B), beta-3 (SCN3B) and beta-4 (SCN4B) subunits. SCN1B and SCN3B are non-covalently associated with SCN9A. SCN2B and SCN4B are disulfide-linked to SCN9A. SCN1B regulates channel inactivation. Interacts with NEDD4 and NEDD4L; regulates Nav1.7 activity most probably through ubiquitination and subsequent endocytosis. Interacts with TMEM233; modulates the gating properties of NaV1.7. In terms of processing, ubiquitinated by NEDD4L; which may promote its endocytosis. Phosphorylation at Ser-1488 by PKC in a highly conserved cytoplasmic loop increases peak sodium currents. In terms of tissue distribution, expressed strongly in sciatic nerves, with moderate levels in kidney. Not detected in liver, brain and muscle.

The protein localises to the cell membrane. It localises to the cell projection. It is found in the neuron projection. The protein resides in the axon. The enzyme catalyses Na(+)(in) = Na(+)(out). Its function is as follows. Pore-forming subunit of Nav1.7, a voltage-gated sodium (Nav) channel that directly mediates the depolarizing phase of action potentials in excitable membranes. Navs, also called VGSCs (voltage-gated sodium channels) or VDSCs (voltage-dependent sodium channels), operate by switching between closed and open conformations depending on the voltage difference across the membrane. In the open conformation they allow Na(+) ions to selectively pass through the pore, along their electrochemical gradient. The influx of Na(+) ions provokes membrane depolarization, initiating the propagation of electrical signals throughout cells and tissues. Nav1.7 plays a crucial role in controlling the excitability and action potential propagation from nociceptor neurons, thereby contributing to the sensory perception of pain. In Mus musculus (Mouse), this protein is Sodium channel protein type 9 subunit alpha.